Here is a 404-residue protein sequence, read N- to C-terminus: Methionine aminopeptidase 1D, mitochondrial (404 aa).

The N-terminal 58 residues, 1–58 (MNKILKNIINKSSINNVFKTSFNGGISSSSSSSSSYLNNNNNIIKSYNVQQKQQQRYY), are a transit peptide targeting the mitochondrion. The interval 86–109 (VRSQRLTKKTASPLEGMNRKERRK) is disordered. His232 is a substrate binding site. Asp249, Asp260, and His323 together coordinate a divalent metal cation. His330 serves as a coordination point for substrate. The a divalent metal cation site is built by Glu355 and Glu389.

This sequence belongs to the peptidase M24A family. Methionine aminopeptidase type 1 subfamily. It depends on Co(2+) as a cofactor. Requires Zn(2+) as cofactor. Mn(2+) is required as a cofactor. The cofactor is Fe(2+).

The protein localises to the mitochondrion. It carries out the reaction Release of N-terminal amino acids, preferentially methionine, from peptides and arylamides.. In terms of biological role, removes the N-terminal methionine from nascent proteins. The N-terminal methionine is often cleaved when the second residue in the primary sequence is small and uncharged (Met-Ala-, Cys, Gly, Pro, Ser, Thr, or Val). The sequence is that of Methionine aminopeptidase 1D, mitochondrial (metap1d) from Dictyostelium discoideum (Social amoeba).